A 113-amino-acid chain; its full sequence is U11-theraphotoxin-Hhn1o (113 aa).

Residues methionine 1 to alanine 21 form the signal peptide. Residues aspartate 22–arginine 74 constitute a propeptide that is removed on maturation. A disordered region spans residues glutamate 61–aspartate 83. 2 cysteine pairs are disulfide-bonded: cysteine 75/cysteine 90 and cysteine 82/cysteine 95.

Belongs to the neurotoxin 14 (magi-1) family. 01 (HNTX-16) subfamily. As to expression, expressed by the venom gland.

It is found in the secreted. Probable ion channel inhibitor. This is U11-theraphotoxin-Hhn1o from Cyriopagopus hainanus (Chinese bird spider).